The primary structure comprises 383 residues: S-(hydroxymethyl)glutathione dehydrogenase (383 aa).

Cys-51 serves as a coordination point for Zn(2+). His-52 contributes to the NAD(+) binding site. Zn(2+) contacts are provided by His-73, Glu-74, Cys-103, Cys-106, Cys-109, Cys-117, and Cys-180. Residues 205–210 (GAGCVG), Asp-229, and 298–300 (IGV) contribute to the NAD(+) site.

Belongs to the zinc-containing alcohol dehydrogenase family. Class-III subfamily. It depends on Zn(2+) as a cofactor.

The enzyme catalyses a primary alcohol + NAD(+) = an aldehyde + NADH + H(+). It carries out the reaction a secondary alcohol + NAD(+) = a ketone + NADH + H(+). The catalysed reaction is S-(hydroxymethyl)glutathione + NADP(+) = S-formylglutathione + NADPH + H(+). It catalyses the reaction S-(hydroxymethyl)glutathione + NAD(+) = S-formylglutathione + NADH + H(+). The enzyme catalyses S-nitrosoglutathione + NADH + H(+) = S-(hydroxysulfenamide)glutathione + NAD(+). Its function is as follows. Oxidizes long-chain alcohols and, in the presence of glutathione, is able to oxidize formaldehyde. Also acts as a S-nitroso-glutathione reductase by catalyzing the NADH-dependent reduction of S-nitrosoglutathione, thereby regulating protein S-nitrosylation. The protein is S-(hydroxymethyl)glutathione dehydrogenase (FDH1) of Aspergillus oryzae (strain ATCC 42149 / RIB 40) (Yellow koji mold).